Consider the following 361-residue polypeptide: Molybdenum import ATP-binding protein ModC (361 aa).

Positions 1-228 constitute an ABC transporter domain; the sequence is MLTINIEKQL…EQMRPWVPLQ (228 aa). 31–38 contributes to the ATP binding site; it reads GRSGAGKT. One can recognise a Mop domain in the interval 289–356; that stretch reads RSSIRNVLKG…IKGVTMTQMD (68 aa).

Belongs to the ABC transporter superfamily. Molybdate importer (TC 3.A.1.8) family. In terms of assembly, the complex is composed of two ATP-binding proteins (ModC), two transmembrane proteins (ModB) and a solute-binding protein (ModA).

It localises to the cell inner membrane. It catalyses the reaction molybdate(out) + ATP + H2O = molybdate(in) + ADP + phosphate + H(+). Functionally, part of the ABC transporter complex ModABC involved in molybdenum import. Responsible for energy coupling to the transport system. This chain is Molybdenum import ATP-binding protein ModC, found in Shewanella oneidensis (strain ATCC 700550 / JCM 31522 / CIP 106686 / LMG 19005 / NCIMB 14063 / MR-1).